A 554-amino-acid chain; its full sequence is Urocanate hydratase (554 aa).

Residues 52-53 (GG), glutamine 130, 176-178 (GMG), glutamate 196, arginine 201, 242-243 (NA), 263-267 (QTSAH), 273-274 (YL), and tyrosine 322 contribute to the NAD(+) site. The active site involves cysteine 410. An NAD(+)-binding site is contributed by glycine 492.

Belongs to the urocanase family. It depends on NAD(+) as a cofactor.

It localises to the cytoplasm. It catalyses the reaction 4-imidazolone-5-propanoate = trans-urocanate + H2O. Its pathway is amino-acid degradation; L-histidine degradation into L-glutamate; N-formimidoyl-L-glutamate from L-histidine: step 2/3. In terms of biological role, catalyzes the conversion of urocanate to 4-imidazolone-5-propionate. This chain is Urocanate hydratase, found in Shewanella halifaxensis (strain HAW-EB4).